A 173-amino-acid chain; its full sequence is Large ribosomal subunit protein uL10 (173 aa).

The protein belongs to the universal ribosomal protein uL10 family. In terms of assembly, part of the ribosomal stalk of the 50S ribosomal subunit. The N-terminus interacts with L11 and the large rRNA to form the base of the stalk. The C-terminus forms an elongated spine to which L12 dimers bind in a sequential fashion forming a multimeric L10(L12)X complex.

Functionally, forms part of the ribosomal stalk, playing a central role in the interaction of the ribosome with GTP-bound translation factors. This is Large ribosomal subunit protein uL10 from Chloroherpeton thalassium (strain ATCC 35110 / GB-78).